The primary structure comprises 666 residues: tRNA 5-methylaminomethyl-2-thiouridine biosynthesis bifunctional protein MnmC (666 aa).

The segment at 1-245 is tRNA (mnm(5)s(2)U34)-methyltransferase; the sequence is MKQYAIQPAT…KREMLCGVME (245 aa). The FAD-dependent cmnm(5)s(2)U34 oxidoreductase stretch occupies residues 270–666; the sequence is IGGGIASALL…RKLLKGKAVK (397 aa).

The protein in the N-terminal section; belongs to the methyltransferase superfamily. tRNA (mnm(5)s(2)U34)-methyltransferase family. This sequence in the C-terminal section; belongs to the DAO family. It depends on FAD as a cofactor.

The protein resides in the cytoplasm. The catalysed reaction is 5-aminomethyl-2-thiouridine(34) in tRNA + S-adenosyl-L-methionine = 5-methylaminomethyl-2-thiouridine(34) in tRNA + S-adenosyl-L-homocysteine + H(+). In terms of biological role, catalyzes the last two steps in the biosynthesis of 5-methylaminomethyl-2-thiouridine (mnm(5)s(2)U) at the wobble position (U34) in tRNA. Catalyzes the FAD-dependent demodification of cmnm(5)s(2)U34 to nm(5)s(2)U34, followed by the transfer of a methyl group from S-adenosyl-L-methionine to nm(5)s(2)U34, to form mnm(5)s(2)U34. The protein is tRNA 5-methylaminomethyl-2-thiouridine biosynthesis bifunctional protein MnmC of Salmonella paratyphi A (strain ATCC 9150 / SARB42).